The chain runs to 294 residues: NAD kinase (294 aa).

The Proton acceptor role is filled by aspartate 72. Residues 72–73 (DG), 146–147 (ND), arginine 157, arginine 174, aspartate 176, 187–192 (TAYALS), and glutamine 247 contribute to the NAD(+) site.

This sequence belongs to the NAD kinase family. A divalent metal cation is required as a cofactor.

The protein localises to the cytoplasm. It catalyses the reaction NAD(+) + ATP = ADP + NADP(+) + H(+). Involved in the regulation of the intracellular balance of NAD and NADP, and is a key enzyme in the biosynthesis of NADP. Catalyzes specifically the phosphorylation on 2'-hydroxyl of the adenosine moiety of NAD to yield NADP. The chain is NAD kinase from Saccharophagus degradans (strain 2-40 / ATCC 43961 / DSM 17024).